A 179-amino-acid polypeptide reads, in one-letter code: Large ribosomal subunit protein uL6 (179 aa).

It belongs to the universal ribosomal protein uL6 family. In terms of assembly, part of the 50S ribosomal subunit.

This protein binds to the 23S rRNA, and is important in its secondary structure. It is located near the subunit interface in the base of the L7/L12 stalk, and near the tRNA binding site of the peptidyltransferase center. In Bifidobacterium longum subsp. infantis (strain ATCC 15697 / DSM 20088 / JCM 1222 / NCTC 11817 / S12), this protein is Large ribosomal subunit protein uL6.